The sequence spans 467 residues: Peptidoglycan-N-acetylmuramic acid deacetylase PdaC (467 aa).

The helical transmembrane segment at 6-26 threads the bilayer; it reads IKWFHVLIAVVCVVGLIGFFH. A NodB homology domain is found at 278–452; sequence KVIALTFDDG…KLTDQGYQLV (175 aa). Asp-285 acts as the Proton acceptor in catalysis. 3 residues coordinate a divalent metal cation: Asp-286, His-336, and His-340. His-427 serves as the catalytic Proton donor.

It in the N-terminal section; belongs to the RsiV family. In the C-terminal section; belongs to the polysaccharide deacetylase family.

The protein resides in the cell membrane. With respect to regulation, activated by divalent metal cations; Mn(2+) is the most efficient, followed by Ca(2+) and Mg(2+). In contrast to PgdA from S.pneumoniae, these ions are not absolutely required for deacetylase activity. Its function is as follows. Catalyzes the deacetylation of N-acetylmuramic acid (MurNAc) residues in peptidoglycan, a modification that confers resistance to lysosyme. Is not able to deacetylate N-acetylglucosamine (GlcNAc) residues in peptidoglycan, but can deacylate chitin oligomers such as GlcNAc4 and GlcNAc5. Is essentially not active toward chitosan (partially deacetylated GlcNAc polymer) and has very low activity toward chitin (GlcNAc polymer). Does not deacetylate GlcNAc. This is Peptidoglycan-N-acetylmuramic acid deacetylase PdaC (pdaC) from Bacillus subtilis (strain 168).